A 352-amino-acid chain; its full sequence is tRNA pseudouridine synthase D (352 aa).

Catalysis depends on D81, which acts as the Nucleophile. In terms of domain architecture, TRUD spans 157-303 (GVPNYFGLQR…MLHERRILRL (147 aa)).

It belongs to the pseudouridine synthase TruD family.

The catalysed reaction is uridine(13) in tRNA = pseudouridine(13) in tRNA. In terms of biological role, responsible for synthesis of pseudouridine from uracil-13 in transfer RNAs. This is tRNA pseudouridine synthase D from Azotobacter vinelandii (strain DJ / ATCC BAA-1303).